The sequence spans 224 residues: Peptidyl-tRNA hydrolase (224 aa).

Tyr-27 provides a ligand contact to tRNA. His-32 (proton acceptor) is an active-site residue. Tyr-78, Asn-80, and Asn-126 together coordinate tRNA. The segment covering 203–215 (LSGPSSDLDGSNP) has biased composition (low complexity). Residues 203 to 224 (LSGPSSDLDGSNPAPGHGEASS) form a disordered region.

It belongs to the PTH family. As to quaternary structure, monomer.

It localises to the cytoplasm. The catalysed reaction is an N-acyl-L-alpha-aminoacyl-tRNA + H2O = an N-acyl-L-amino acid + a tRNA + H(+). In terms of biological role, hydrolyzes ribosome-free peptidyl-tRNAs (with 1 or more amino acids incorporated), which drop off the ribosome during protein synthesis, or as a result of ribosome stalling. Catalyzes the release of premature peptidyl moieties from peptidyl-tRNA molecules trapped in stalled 50S ribosomal subunits, and thus maintains levels of free tRNAs and 50S ribosomes. The chain is Peptidyl-tRNA hydrolase from Synechococcus sp. (strain JA-2-3B'a(2-13)) (Cyanobacteria bacterium Yellowstone B-Prime).